We begin with the raw amino-acid sequence, 402 residues long: Flavohemoprotein (402 aa).

The Globin domain maps to 1-136 (MLSAKTIEIV…IADAFISIEA (136 aa)). Position 85 (histidine 85) interacts with heme b. Active-site charge relay system residues include tyrosine 95 and glutamate 135. Residues 147-402 (GGWKDFRNFV…EFFGPATSLQ (256 aa)) are reductase. The FAD-binding FR-type domain maps to 150–260 (KDFRNFVIVK…SAPAGDFVLN (111 aa)). FAD is bound by residues tyrosine 188 and 204-207 (RQYS). 273–278 (GVGITP) serves as a coordination point for NADP(+). An FAD-binding site is contributed by 394–397 (FFGP).

Belongs to the globin family. Two-domain flavohemoproteins subfamily. It in the C-terminal section; belongs to the flavoprotein pyridine nucleotide cytochrome reductase family. Requires heme b as cofactor. It depends on FAD as a cofactor.

The catalysed reaction is 2 nitric oxide + NADPH + 2 O2 = 2 nitrate + NADP(+) + H(+). It catalyses the reaction 2 nitric oxide + NADH + 2 O2 = 2 nitrate + NAD(+) + H(+). In terms of biological role, is involved in NO detoxification in an aerobic process, termed nitric oxide dioxygenase (NOD) reaction that utilizes O(2) and NAD(P)H to convert NO to nitrate, which protects the bacterium from various noxious nitrogen compounds. Therefore, plays a central role in the inducible response to nitrosative stress. This Bacillus cereus (strain ATCC 14579 / DSM 31 / CCUG 7414 / JCM 2152 / NBRC 15305 / NCIMB 9373 / NCTC 2599 / NRRL B-3711) protein is Flavohemoprotein.